Consider the following 497-residue polypeptide: Zinc finger CCCH domain-containing protein 22 (497 aa).

The C3H1-type zinc finger occupies 136–163; that stretch reads SESMMICKFFMQQRCRFGSSCRSSHGLD. The segment at 236–281 is disordered; it reads AQMTDDDGEEEEEEDEQQSASDSEDSVSSDYDEGSPQGIGFLESTN. The segment covering 239-268 has biased composition (acidic residues); the sequence is TDDDGEEEEEEDEQQSASDSEDSVSSDYDE. The region spanning 300 to 346 is the G-patch domain; sequence TRGIASKMMASMGYREGMGLGVSGQGILNPILVKVLPAKRSLDYALE. The segment at 352-387 is disordered; it reads ECKSEKQKKKRSRGGKRKRGKKFAEAAKAAKQEEES. Residues 357–372 are compositionally biased toward basic residues; sequence KQKKKRSRGGKRKRGK. Over residues 373 to 387 the composition is skewed to basic and acidic residues; sequence KFAEAAKAAKQEEES.

The sequence is that of Zinc finger CCCH domain-containing protein 22 from Arabidopsis thaliana (Mouse-ear cress).